A 341-amino-acid chain; its full sequence is Major histocompatibility complex class I-related protein 1 (341 aa).

An N-terminal signal peptide occupies residues 1–22 (MGELMAFLLPLIIVLMVKHSDS). The tract at residues 23-109 (RTHSLRYFRL…KRLQRHYNHS (87 aa)) is alpha-1. The segment at 23 to 201 (RTHSLRYFRL…EYGKDILQRT (179 aa)) is antigen-binding cleft. The Extracellular segment spans residues 23-302 (RTHSLRYFRL…QESETIPLVM (280 aa)). 8-(9H-purin-6-yl)-2-oxa-8-azabicyclo[3.3.1]nona-3,6-diene-4,6-dicarbaldehyde-binding residues include tyrosine 29 and arginine 31. Residues arginine 31, serine 46, and lysine 65 each coordinate 5-(2-oxoethylideneamino)-6-(D-ribitylamino)uracil. The 5-(2-oxopropylideneamino)-6-(D-ribitylamino)uracil site is built by arginine 31, serine 46, and lysine 65. Positions 31, 46, and 65 each coordinate 7-hydroxy-6-methyl-8-(1-D-ribityl)lumazine. Residues lysine 65 and histidine 80 each coordinate 8-(9H-purin-6-yl)-2-oxa-8-azabicyclo[3.3.1]nona-3,6-diene-4,6-dicarbaldehyde. Lysine 65 provides a ligand contact to 2-amino-4-oxopteridine-6-carbaldehyde. Pyridoxal is bound at residue lysine 65. Asparagine 107 carries N-linked (GlcNAc...) asparagine glycosylation. Residues 110–201 (GSHTYQRMIG…EYGKDILQRT (92 aa)) form an alpha-2 region. Residue arginine 116 coordinates 8-(9H-purin-6-yl)-2-oxa-8-azabicyclo[3.3.1]nona-3,6-diene-4,6-dicarbaldehyde. 5-(2-oxoethylideneamino)-6-(D-ribitylamino)uracil-binding residues include arginine 116, tyrosine 174, and glutamine 175. Residues arginine 116, tyrosine 174, and glutamine 175 each contribute to the 5-(2-oxopropylideneamino)-6-(D-ribitylamino)uracil site. The 7-hydroxy-6-methyl-8-(1-D-ribityl)lumazine site is built by arginine 116, tyrosine 174, and glutamine 175. Intrachain disulfides connect cysteine 120–cysteine 183 and cysteine 222–cysteine 278. The segment at 202 to 293 (EPPLVRVNRK…GVHMVLQVPQ (92 aa)) is alpha-3. The 97-residue stretch at 203-299 (PPLVRVNRKE…QVPQESETIP (97 aa)) folds into the Ig-like C1-type domain. The tract at residues 294-302 (ESETIPLVM) is connecting peptide. Residues 303 to 323 (KAVSGSIVLVIVLAGVGVLVW) form a helical membrane-spanning segment. At 324-341 (RRRPREQNGAIYLPTPDR) the chain is on the cytoplasmic side.

This sequence belongs to the MHC class I family. In terms of assembly, heterotrimer that consists of MR1, B2M and metabolite antigen. Major classes of metabolite ligands presented by MR1 include riboflavin-related antigens, pyrimidines and ribityl lumazines, nucleobase adducts and folate derivatives. Forms reversible covalent Schiff base complexes with microbial pyrimidine-based metabolite, which serves as a molecular switch triggering complete folding, stable association with B2M and translocation of the ternary complex from endoplasmic reticulum to the plasma membrane. Alternatively, forms non-Schiff base complexes with ribityl lumazines. On antigen-presenting cells, the ternary complex interacts with TCR on MR1-restricted T cells. Interacts with TAPBP and TAPBPL chaperones in the endoplasmic reticulum. TAPBP associated or not with MHC class I peptide loading complex binds ligand-free MR1 or MR1-B2M complex, providing for stable MR1 pools ready for metabolite antigen processing. TAPBPL interacts with MR1 in a ligand-independent way; this interaction may stabilize MR1 pool and facilitate ligand loading and dissociation. Structurally, MR1-B2M heterodimer adopts a topology similar to classical MHC class I molecules, with alpha-1 and alpha-2 domains of MR1 forming the antigen-binding cleft composed of two alpha-helices resting on a floor of 7-stranded anti-parallel beta-pleated sheet. MR1-B2M heterodimer (via alpha-helices) interacts with TCR (via CDR domains). In terms of processing, N-glycosylated.

The protein resides in the cell membrane. Its subcellular location is the endoplasmic reticulum membrane. The protein localises to the golgi apparatus membrane. It is found in the early endosome membrane. It localises to the late endosome membrane. Antigen-presenting molecule specialized in displaying microbial pyrimidine-based metabolites to alpha-beta T cell receptors (TCR) on innate-type mucosal-associated invariant T (MAIT) cells. In complex with B2M preferentially presents riboflavin-derived metabolites to semi-invariant TCRs on MAIT cells, guiding immune surveillance of the microbial metabolome at mucosal epithelial barriers. Signature pyrimidine-based microbial antigens are generated via non-enzymatic condensation of metabolite intermediates of the riboflavin pathway with by-products arising from other metabolic pathways such as glycolysis. Typical potent antigenic metabolites are 5-(2-oxoethylideneamino)-6-D-ribitylaminouracil (5-OE-RU) and 5-(2-oxopropylideneamino)-6-D-ribitylaminouracil (5-OP-RU), products of condensation of 5-amino-6-D-ribityaminouracil (5-A-RU) with glyoxal or methylglyoxal by-products, respectively. May present microbial antigens to various MAIT cell subsets, providing for unique recognition of diverse microbes, including pathogens that do not synthesize riboflavin. Upon antigen recognition, elicits rapid innate-type MAIT cell activation to eliminate pathogenic microbes by directly killing infected cells. During T cell development, drives thymic selection and post-thymic terminal differentiation of MAIT cells in a process dependent on commensal microflora. Acts as an immune sensor of cancer cell metabolome. May present a tumor-specific or -associated metabolite essential for cancer cell survival to a pan-cancer TCR on a non-MAIT CD8-positive T cell clone, triggering T cell-mediated killing of a wide range of cancer cell types. May present tumor-enriched pyridoxal and pyridoxal 5'-phosphate antigens, enabling preferential recognition of cancer cells. Presents nucleobase carbonyl adducts generated during oxidative stress. Captures M3Ade, a nucleobase adduct composed of one adenine modified by a malondialdehyde trimer, for recognition by MR1-restricted T cell clones expressing a polyclonal TCR repertoire. In Pan troglodytes (Chimpanzee), this protein is Major histocompatibility complex class I-related protein 1.